The sequence spans 389 residues: Na(+)/H(+) antiporter NhaA (389 aa).

Helical transmembrane passes span 17-37 (ILLLVAVALAMLMANSPLAGL), 59-79 (LLLWINDGLMALFFLLIGLEV), 95-115 (SLPTFAAIGGMLVPAGIYLLF), 124-144 (AGWAIPAATDIAFALGIMALL), 154-174 (VFLLALAIIDDLGVIVIIALF), 177-197 (TDLSTISLIIASIAIVGLVAL), 213-233 (LVLWVAVLKSGVHATLAGVII), 261-281 (FLILPVFAFANAGVALGNMSL), 287-307 (PVPVGIALGLMLGKPIGVMLF), 328-348 (IAPVAAMCGIGFTMSMFIASL), and 363-383 (LGTLIGSIIAALIGYFWLSKV).

It belongs to the NhaA Na(+)/H(+) (TC 2.A.33) antiporter family.

It localises to the cell inner membrane. The catalysed reaction is Na(+)(in) + 2 H(+)(out) = Na(+)(out) + 2 H(+)(in). Functionally, na(+)/H(+) antiporter that extrudes sodium in exchange for external protons. The sequence is that of Na(+)/H(+) antiporter NhaA from Shewanella sp. (strain MR-7).